The primary structure comprises 293 residues: Shikimate dehydrogenase (NADP(+)) (293 aa).

Residues 26-28 (SKS) and T73 each bind shikimate. K77 acts as the Proton acceptor in catalysis. Position 89 (D89) interacts with NADP(+). The shikimate site is built by N98 and D113. NADP(+) contacts are provided by residues 137 to 141 (GAGGA), 161 to 166 (NRTKQR), and I231. Y233 contributes to the shikimate binding site. G254 lines the NADP(+) pocket.

This sequence belongs to the shikimate dehydrogenase family. In terms of assembly, homodimer.

The enzyme catalyses shikimate + NADP(+) = 3-dehydroshikimate + NADPH + H(+). Its pathway is metabolic intermediate biosynthesis; chorismate biosynthesis; chorismate from D-erythrose 4-phosphate and phosphoenolpyruvate: step 4/7. Involved in the biosynthesis of the chorismate, which leads to the biosynthesis of aromatic amino acids. Catalyzes the reversible NADPH linked reduction of 3-dehydroshikimate (DHSA) to yield shikimate (SA). The protein is Shikimate dehydrogenase (NADP(+)) of Bartonella henselae (strain ATCC 49882 / DSM 28221 / CCUG 30454 / Houston 1) (Rochalimaea henselae).